The primary structure comprises 363 residues: Aminomethyltransferase (363 aa).

This sequence belongs to the GcvT family. In terms of assembly, the glycine cleavage system is composed of four proteins: P, T, L and H.

It catalyses the reaction N(6)-[(R)-S(8)-aminomethyldihydrolipoyl]-L-lysyl-[protein] + (6S)-5,6,7,8-tetrahydrofolate = N(6)-[(R)-dihydrolipoyl]-L-lysyl-[protein] + (6R)-5,10-methylene-5,6,7,8-tetrahydrofolate + NH4(+). In terms of biological role, the glycine cleavage system catalyzes the degradation of glycine. This Thermotoga neapolitana (strain ATCC 49049 / DSM 4359 / NBRC 107923 / NS-E) protein is Aminomethyltransferase.